The sequence spans 179 residues: Large ribosomal subunit protein uL6 (179 aa).

The protein belongs to the universal ribosomal protein uL6 family. As to quaternary structure, part of the 50S ribosomal subunit.

In terms of biological role, this protein binds to the 23S rRNA, and is important in its secondary structure. It is located near the subunit interface in the base of the L7/L12 stalk, and near the tRNA binding site of the peptidyltransferase center. This chain is Large ribosomal subunit protein uL6, found in Synechococcus sp. (strain RCC307).